Reading from the N-terminus, the 338-residue chain is 1-aminocyclopropane-1-carboxylate deaminase (338 aa).

Residue K51 is modified to N6-(pyridoxal phosphate)lysine. S78 acts as the Nucleophile in catalysis.

The protein belongs to the ACC deaminase/D-cysteine desulfhydrase family. Homotrimer. The cofactor is pyridoxal 5'-phosphate.

The catalysed reaction is 1-aminocyclopropane-1-carboxylate + H2O = 2-oxobutanoate + NH4(+). Catalyzes a cyclopropane ring-opening reaction, the irreversible conversion of 1-aminocyclopropane-1-carboxylate (ACC) to ammonia and alpha-ketobutyrate. Allows growth on ACC as a nitrogen source. The sequence is that of 1-aminocyclopropane-1-carboxylate deaminase from Pseudomonas syringae pv. syringae (strain B728a).